Consider the following 337-residue polypeptide: Ketol-acid reductoisomerase (NADP(+)) (337 aa).

The KARI N-terminal Rossmann domain occupies 1-181 (MKIYYEHDAD…GAARAGVIAT (181 aa)). Residues 24-27 (FGSQ), Arg47, Ser50, Ser52, and 82-85 (DEKQ) contribute to the NADP(+) site. His107 is an active-site residue. Gly133 contributes to the NADP(+) binding site. The region spanning 182–328 (TFKDETETDL…SRLRAMMPFL (147 aa)) is the KARI C-terminal knotted domain. 4 residues coordinate Mg(2+): Asp190, Glu194, Glu226, and Glu230. Substrate is bound at residue Ser251.

The protein belongs to the ketol-acid reductoisomerase family. Mg(2+) serves as cofactor.

It catalyses the reaction (2R)-2,3-dihydroxy-3-methylbutanoate + NADP(+) = (2S)-2-acetolactate + NADPH + H(+). The catalysed reaction is (2R,3R)-2,3-dihydroxy-3-methylpentanoate + NADP(+) = (S)-2-ethyl-2-hydroxy-3-oxobutanoate + NADPH + H(+). It functions in the pathway amino-acid biosynthesis; L-isoleucine biosynthesis; L-isoleucine from 2-oxobutanoate: step 2/4. It participates in amino-acid biosynthesis; L-valine biosynthesis; L-valine from pyruvate: step 2/4. Functionally, involved in the biosynthesis of branched-chain amino acids (BCAA). Catalyzes an alkyl-migration followed by a ketol-acid reduction of (S)-2-acetolactate (S2AL) to yield (R)-2,3-dihydroxy-isovalerate. In the isomerase reaction, S2AL is rearranged via a Mg-dependent methyl migration to produce 3-hydroxy-3-methyl-2-ketobutyrate (HMKB). In the reductase reaction, this 2-ketoacid undergoes a metal-dependent reduction by NADPH to yield (R)-2,3-dihydroxy-isovalerate. The protein is Ketol-acid reductoisomerase (NADP(+)) of Thermus thermophilus (strain ATCC BAA-163 / DSM 7039 / HB27).